A 215-amino-acid chain; its full sequence is Ribose-5-phosphate isomerase A (215 aa).

Residues T26 to T29, D79 to D82, and K92 to G95 each bind substrate. E101 serves as the catalytic Proton acceptor. K119 is a binding site for substrate.

This sequence belongs to the ribose 5-phosphate isomerase family. As to quaternary structure, homodimer.

The catalysed reaction is aldehydo-D-ribose 5-phosphate = D-ribulose 5-phosphate. The protein operates within carbohydrate degradation; pentose phosphate pathway; D-ribose 5-phosphate from D-ribulose 5-phosphate (non-oxidative stage): step 1/1. Functionally, catalyzes the reversible conversion of ribose-5-phosphate to ribulose 5-phosphate. The sequence is that of Ribose-5-phosphate isomerase A from Stenotrophomonas maltophilia (strain K279a).